A 235-amino-acid polypeptide reads, in one-letter code: UPF0749 protein YlxX (235 aa).

Residues 6–26 (SFISISVLMVIFGLMISVQFN) form a helical membrane-spanning segment.

Belongs to the UPF0749 family.

The protein localises to the cell membrane. The protein is UPF0749 protein YlxX (ylxX) of Bacillus subtilis (strain 168).